Reading from the N-terminus, the 43-residue chain is Lanthionine-containing peptide SapB (43 aa).

A signal peptide spans 1–21; that stretch reads MALLDLQAMDTPAEDSFGELR. Cross-links (lanthionine (Ser-Cys)) lie at residues 24-31 and 34-41; these read SQVSLLVC and SSLSVVLC. Residues serine 27 and serine 37 each carry the 2,3-didehydroalanine (Ser) modification.

It belongs to the lanthionine-containing morphogen protein family. In terms of processing, maturation involves the enzymatic conversion of Ser into dehydrated AA and the formation of thioether bonds with cysteine. This is followed by membrane translocation and cleavage of the modified precursor.

Lanthionine-containing peptide devoid of antibiotic properties, involved in the formation of aerial mycelium. Suggested to self-assemble at air-water interfaces, thus providing a film of surfactant through which nascent aerial hyphae can emerge. The aerial hyphae differentiate further into spores. The protein is Lanthionine-containing peptide SapB (ramS) of Streptomyces griseus.